Consider the following 255-residue polypeptide: NAD kinase (255 aa).

D44 (proton acceptor) is an active-site residue. NAD(+)-binding positions include 44–45, H49, 114–115, D144, A152, 155–160, and Q216; these read DG, NE, and SAYNLS.

It belongs to the NAD kinase family. The cofactor is a divalent metal cation.

Its subcellular location is the cytoplasm. It catalyses the reaction NAD(+) + ATP = ADP + NADP(+) + H(+). Its function is as follows. Involved in the regulation of the intracellular balance of NAD and NADP, and is a key enzyme in the biosynthesis of NADP. Catalyzes specifically the phosphorylation on 2'-hydroxyl of the adenosine moiety of NAD to yield NADP. The polypeptide is NAD kinase (Rickettsia typhi (strain ATCC VR-144 / Wilmington)).